The chain runs to 463 residues: L-2-hydroxyglutarate dehydrogenase, mitochondrial (463 aa).

The N-terminal 51 residues, 1-51 (MVPALRYLVGACGRARGLFAGGSPGACGFASGRPRPLCGGSRSASTSSFDI), are a transit peptide targeting the mitochondrion. Lys-104, Lys-155, and Lys-173 each carry N6-acetyllysine.

It belongs to the L2HGDH family. FAD is required as a cofactor. Widely expressed. Highly expressed in brain, testis and muscle. Expressed to a lower extent in lymphocytes, fibroblasts, keratinocytes, placenta, bladder, small intestine, liver and bone marrow.

It localises to the mitochondrion. The enzyme catalyses (S)-2-hydroxyglutarate + A = 2-oxoglutarate + AH2. The chain is L-2-hydroxyglutarate dehydrogenase, mitochondrial (L2HGDH) from Homo sapiens (Human).